The primary structure comprises 85 residues: Hepcidin (85 aa).

The first 24 residues, 1–24 (MKTFSVAVAVAVVLAFICLQESSA), serve as a signal peptide directing secretion. A propeptide spanning residues 25–64 (VPVTEVQELEEPMSNEYQEMPVESWKMPYNNRHKRHSSPG) is cleaved from the precursor. Intrachain disulfides connect C66–C83, C69–C72, C70–C79, and C73–C82.

As to expression, predominantly expressed in liver.

The protein resides in the secreted. Functionally, seems to act as a signaling molecule involved in the maintenance of iron homeostasis. Seems to be required in conjunction with HFE to regulate both intestinal iron absorption and iron storage in macrophages. In terms of biological role, antimicrobial activity against Gram-negative bacteria such as E.coli. This chain is Hepcidin (hamp), found in Morone chrysops x Morone saxatilis (White bass x Striped bass).